Here is a 275-residue protein sequence, read N- to C-terminus: 4-hydroxy-tetrahydrodipicolinate reductase (275 aa).

NAD(+) contacts are provided by residues 13 to 18 (GAAGKM) and 108 to 110 (GTT). The active-site Proton donor/acceptor is His164. His165 contributes to the (S)-2,3,4,5-tetrahydrodipicolinate binding site. The Proton donor role is filled by Lys168. Residue 174–175 (GT) participates in (S)-2,3,4,5-tetrahydrodipicolinate binding.

The protein belongs to the DapB family.

The protein localises to the cytoplasm. The enzyme catalyses (S)-2,3,4,5-tetrahydrodipicolinate + NAD(+) + H2O = (2S,4S)-4-hydroxy-2,3,4,5-tetrahydrodipicolinate + NADH + H(+). It catalyses the reaction (S)-2,3,4,5-tetrahydrodipicolinate + NADP(+) + H2O = (2S,4S)-4-hydroxy-2,3,4,5-tetrahydrodipicolinate + NADPH + H(+). The protein operates within amino-acid biosynthesis; L-lysine biosynthesis via DAP pathway; (S)-tetrahydrodipicolinate from L-aspartate: step 4/4. Its function is as follows. Catalyzes the conversion of 4-hydroxy-tetrahydrodipicolinate (HTPA) to tetrahydrodipicolinate. The chain is 4-hydroxy-tetrahydrodipicolinate reductase from Rippkaea orientalis (strain PCC 8801 / RF-1) (Cyanothece sp. (strain PCC 8801)).